Consider the following 414-residue polypeptide: TAR DNA-binding protein 43 (414 aa).

Glycyl lysine isopeptide (Lys-Gly) (interchain with G-Cter in SUMO2) cross-links involve residues lysine 79, lysine 84, lysine 95, lysine 102, and lysine 181. RRM domains are found at residues 104–200 and 191–262; these read SDLI…RCTE and RKVF…NAEP. Serine 183 bears the Phosphoserine mark. The interaction with UBQLN2 stretch occupies residues 216–414; the sequence is DVMDVFIPKP…MDSKSSGWGM (199 aa). The segment covering 261 to 274 has biased composition (basic and acidic residues); it reads EPKHNSNRQLERSG. Disordered stretches follow at residues 261 to 303 and 341 to 373; these read EPKH…GNNQ and ASQQ…GNNS. Residue lysine 263 forms a Glycyl lysine isopeptide (Lys-Gly) (interchain with G-Cter in SUMO2) linkage. Residues 275-303 are compositionally biased toward gly residues; sequence RFGGNPGGFGNQGGFGNSRGGGAGLGNNQ. At serine 292 the chain carries Phosphoserine. Arginine 293 is modified (omega-N-methylarginine). A compositionally biased stretch (low complexity) spans 342–358; it reads SQQNQSGPSGNNQNQGN.

Monomer and component of the SFPQ-NONO complex, which is probably a heterotetramer of two 52 kDa (NONO) and two 100 kDa (SFPQ) subunits. NONO is a component of spliceosome and U5.4/6 snRNP complexes. Interacts with CPNE4 (via VWFA domain). Forms heterodimers with PSPC1; this involves formation of a coiled coil domain by helices from both proteins. Part of complex consisting of SFPQ, NONO and MATR3. Part of a complex consisting of SFPQ, NONO and NR5A1. Part of a complex consisting of SFPQ, NONO and TOP1. Interacts with SPI1. Interacts with RNF43. Interacts with PER1 and PER2. Part of the HDP-RNP complex composed of at least HEXIM1, PRKDC, XRCC5, XRCC6, paraspeckle proteins (SFPQ, NONO, PSPC1, RBM14, and MATR3) and NEAT1 RNA. Interacts (via second RRM domain) with WASL; the interaction is direct. Component of a multiprotein complex with WASL and SFPQ. Interacts with ERCC6. Interacts (via DNA-binding domain) with TET1. In terms of processing, hyperphosphorylated. Post-translationally, ubiquitinated.

It localises to the nucleus. Its subcellular location is the nucleolus. The protein resides in the nucleus speckle. It is found in the chromosome. The protein localises to the mitochondrion. Functionally, DNA- and RNA binding protein, involved in several nuclear processes. Binds the conventional octamer sequence in double-stranded DNA. Also binds single-stranded DNA and RNA at a site independent of the duplex site. Involved in pre-mRNA splicing, probably as a heterodimer with SFPQ. Interacts with U5 snRNA, probably by binding to a purine-rich sequence located on the 3' side of U5 snRNA stem 1b. Together with PSPC1, required for the formation of nuclear paraspeckles. The SFPQ-NONO heteromer associated with MATR3 may play a role in nuclear retention of defective RNAs. The SFPQ-NONO heteromer may be involved in DNA unwinding by modulating the function of topoisomerase I/TOP1. The SFPQ-NONO heteromer may be involved in DNA non-homologous end joining (NHEJ) required for double-strand break repair and V(D)J recombination and may stabilize paired DNA ends. In vitro, the complex strongly stimulates DNA end joining, binds directly to the DNA substrates and cooperates with the Ku70/G22P1-Ku80/XRCC5 (Ku) dimer to establish a functional preligation complex. NONO is involved in transcriptional regulation. The SFPQ-NONO-NR5A1 complex binds to the CYP17 promoter and regulates basal and cAMP-dependent transcriptional activity. NONO binds to an enhancer element in long terminal repeats of endogenous intracisternal A particles (IAPs) and activates transcription. Regulates the circadian clock by repressing the transcriptional activator activity of the CLOCK-BMAL1 heterodimer. Important for the functional organization of GABAergic synapses. Plays a specific and important role in the regulation of synaptic RNAs and GPHN/gephyrin scaffold structure, through the regulation of GABRA2 transcript. Plays a key role during neuronal differentiation by recruiting TET1 to genomic loci and thereby regulating 5-hydroxymethylcytosine levels. Plays a role in the regulation of DNA virus-mediated innate immune response by assembling into the HDP-RNP complex, a complex that serves as a platform for IRF3 phosphorylation and subsequent innate immune response activation through the cGAS-STING pathway. This is TAR DNA-binding protein 43 (TARDBP) from Pongo abelii (Sumatran orangutan).